A 198-amino-acid polypeptide reads, in one-letter code: Endothelin-3 (198 aa).

The signal sequence occupies residues 1-16 (MEPGLWLLFGLTVTSA). Positions 17–86 (AGLVPCPQPG…SKGGPVHGRA (70 aa)) are excised as a propeptide. The tract at residues 22 to 79 (CPQPGDAGKSGVPGTPPTARSEGDIQEPVAMTAVQGPSPRSPEQEQELGRFGEQASKG) is disordered. 2 disulfides stabilise this stretch: C89-C103 and C91-C99. Residues 110 to 198 (INTPEQTVPY…RGNGGLRPTR (89 aa)) constitute a propeptide that is removed on maturation. The interval 150–164 (CACVQSQDSACLHFC) is endothelin-like. The interval 174 to 198 (SRTATNPDKEEEPASRGNGGLRPTR) is disordered.

The protein belongs to the endothelin/sarafotoxin family. As to expression, expressed in which included heart, lung, liver, kidney, spleen, stomach, pancreas, duodenum, colon, uterus, ovary and testis.

It is found in the secreted. Functionally, endothelins are endothelium-derived vasoconstrictor peptides. This is Endothelin-3 (EDN3) from Canis lupus familiaris (Dog).